A 385-amino-acid polypeptide reads, in one-letter code: Torsin-3A (385 aa).

A signal peptide spans 1–21; the sequence is MFLGALWLLLLLPLRPPGAQG. Residue asparagine 110 is glycosylated (N-linked (GlcNAc...) asparagine). Residue 155–162 participates in ATP binding; sequence GWSGTGKN.

It belongs to the ClpA/ClpB family. Torsin subfamily. Interacts with TOR1AIP1. In terms of processing, N-glycosylated.

It is found in the cytoplasm. The protein resides in the endoplasmic reticulum lumen. This Mus musculus (Mouse) protein is Torsin-3A (Tor3a).